Here is a 422-residue protein sequence, read N- to C-terminus: GPI mannosyltransferase 1 (422 aa).

A run of 8 helical transmembrane segments spans residues 10-30 (TTPLFTISLLLRLGLLFYGIY), 82-102 (FPAFGKLVFAAADLLAGWLIL), 162-182 (IILGLSVHFKIYPFIYAPAIV), 216-236 (LKFGLLSLITFMILNLVMFAI), 282-302 (IESFAFLPQLLLSCVLIPLAL), 327-347 (SQYFLWYMIFLPLYLPNSSFL), 352-372 (LGIFALLLWIVSQAAWLQQGY), and 385-405 (GLWLASIAFFLVNCWILGVII).

Belongs to the PIGM family.

It localises to the endoplasmic reticulum membrane. Its pathway is glycolipid biosynthesis; glycosylphosphatidylinositol-anchor biosynthesis. Mannosyltransferase involved in glycosylphosphatidylinositol-anchor biosynthesis. Transfers the first alpha-1,4-mannose to GlcN-acyl-PI during GPI precursor assembly. Required for cell wall integrity. This chain is GPI mannosyltransferase 1 (GPI14), found in Gibberella zeae (strain ATCC MYA-4620 / CBS 123657 / FGSC 9075 / NRRL 31084 / PH-1) (Wheat head blight fungus).